The sequence spans 446 residues: Adenylosuccinate synthetase (446 aa).

GTP-binding positions include 12–18 and 40–42; these read GDEGKGK and GHT. The Proton acceptor role is filled by D13. Mg(2+) is bound by residues D13 and G40. Residues 13 to 16, 38 to 41, T128, R142, Q223, T238, and R302 contribute to the IMP site; these read DEGK and NAGH. H41 serves as the catalytic Proton donor. Residue 298–304 participates in substrate binding; the sequence is TTTGRRR. GTP contacts are provided by residues R304, 330–332, and 412–414; these read KLD and SLG.

The protein belongs to the adenylosuccinate synthetase family. Homodimer. Mg(2+) serves as cofactor.

Its subcellular location is the cytoplasm. It carries out the reaction IMP + L-aspartate + GTP = N(6)-(1,2-dicarboxyethyl)-AMP + GDP + phosphate + 2 H(+). Its pathway is purine metabolism; AMP biosynthesis via de novo pathway; AMP from IMP: step 1/2. In terms of biological role, plays an important role in the de novo pathway of purine nucleotide biosynthesis. Catalyzes the first committed step in the biosynthesis of AMP from IMP. This is Adenylosuccinate synthetase from Acaryochloris marina (strain MBIC 11017).